The following is a 728-amino-acid chain: Catalase-peroxidase 1 (728 aa).

Positions 91 to 218 (WHGAGTYRIA…LAAVQMGLIY (128 aa)) form a cross-link, tryptophyl-tyrosyl-methioninium (Trp-Tyr) (with M-244). Residue His92 is the Proton acceptor of the active site. Residues 218–244 (YVNPEGPDGKPDPVAAARDIRDTFARM) constitute a cross-link (tryptophyl-tyrosyl-methioninium (Tyr-Met) (with W-91)). Heme b is bound at residue His259.

The protein belongs to the peroxidase family. Peroxidase/catalase subfamily. As to quaternary structure, homodimer or homotetramer. The cofactor is heme b. Post-translationally, formation of the three residue Trp-Tyr-Met cross-link is important for the catalase, but not the peroxidase activity of the enzyme.

It carries out the reaction H2O2 + AH2 = A + 2 H2O. The enzyme catalyses 2 H2O2 = O2 + 2 H2O. Bifunctional enzyme with both catalase and broad-spectrum peroxidase activity. The protein is Catalase-peroxidase 1 of Burkholderia vietnamiensis (strain G4 / LMG 22486) (Burkholderia cepacia (strain R1808)).